The sequence spans 982 residues: Protein lin-10 (982 aa).

The span at 1–16 (MSSEAVAQATAATTSP) shows a compositional bias: polar residues. Disordered stretches follow at residues 1–55 (MSSE…MIPP), 119–228 (QPAL…RTDS), 269–327 (TVAD…STVP), 432–511 (FAQQ…GTDD), and 525–593 (QREQ…SKET). A compositionally biased stretch (gly residues) spans 33 to 44 (KGGGAGGGGGGE). Positions 119–134 (QPALQQPRPSSQASSS) are enriched in low complexity. 2 stretches are compositionally biased toward polar residues: residues 143 to 156 (RQTA…NVSP) and 169 to 190 (ETSG…SSDV). Over residues 211 to 228 (GEEKSEEKRKLSGDRTDS) the composition is skewed to basic and acidic residues. Residues 301–318 (SLNQLRSSFNLPDDSTTV) show a composition bias toward polar residues. 2 stretches are compositionally biased toward low complexity: residues 432–445 (FAQQ…APTP) and 454–464 (PSTSSGPSGAL). A compositionally biased stretch (polar residues) spans 490–501 (NGTSTSTTNGAQ). Residues 539-550 (QEAATAAQEAAE) are compositionally biased toward low complexity. Over residues 577–593 (GAERRGSVDKKKNSKET) the composition is skewed to basic and acidic residues. One can recognise a PID domain in the interval 604 to 788 (GVLFRARYLG…VLNSQELLGD (185 aa)). PDZ domains follow at residues 801-886 (EVVV…TVVS) and 892-968 (EVRI…MPTS).

Interacts (via N-terminus) with egl-9 isoform e (via catalytic domain); the interaction regulates its trafficking; the interaction is direct. Interacts with rab-6.2 (in GTP-bound form). In terms of processing, phosphorylated on multiple Ser and Thr residues by cdk-5 which regulates its localization. Post-translationally, may be hydroxylated by egl-9 isoform e on multiple Pro residues which may prevent phosphorylation by cdk-5. In terms of tissue distribution, expressed in vulval epithelial cells and neurons.

It is found in the golgi apparatus. The protein resides in the golgi stack membrane. It localises to the trans-Golgi network membrane. The protein localises to the cytoplasm. Its subcellular location is the synapse. It is found in the perikaryon. In terms of biological role, required specifically for the determination of 3 vulval precursor cell fates P5.p, P6.p and P7.p during late second and early third larval stages; required for basolateral localization of receptor tyrosine kinase let-23. Could have a general but redundant role in development, functioning in diverse cell lineages to control cell fates. Regulates the trafficking of the glr-1 subunit of AMPA-type glutamate receptors (AMPRs) in the ventral nerve cord. This may be partly through interacting with the small GTPase rab-6.2 in its active GTP-bound state. The chain is Protein lin-10 from Caenorhabditis elegans.